The sequence spans 310 residues: 17-beta-hydroxysteroid dehydrogenase type 3 (310 aa).

Residue 48 to 77 (GQWAVITGAGDGIGKAYSFELAKRGLNVVL) participates in NADP(+) binding. Position 185 (serine 185) interacts with substrate. Tyrosine 198 functions as the Proton acceptor in the catalytic mechanism.

This sequence belongs to the short-chain dehydrogenases/reductases (SDR) family. 17-beta-HSD 3 subfamily. In terms of tissue distribution, testis.

The protein resides in the endoplasmic reticulum. It carries out the reaction a 17beta-hydroxy steroid + NADP(+) = a 17-oxo steroid + NADPH + H(+). The catalysed reaction is testosterone + NADP(+) = androst-4-ene-3,17-dione + NADPH + H(+). The enzyme catalyses 17beta-estradiol + NADP(+) = estrone + NADPH + H(+). It catalyses the reaction 3beta-hydroxyandrost-5-en-17-one + NADPH + H(+) = androst-5-en-3beta,17beta-diol + NADP(+). It carries out the reaction 17beta-hydroxy-5alpha-androstan-3-one + NADP(+) = 5alpha-androstan-3,17-dione + NADPH + H(+). The catalysed reaction is androsterone + NADPH + H(+) = 5alpha-androstane-3alpha,17beta-diol + NADP(+). The enzyme catalyses 3beta-hydroxy-5alpha-androstan-17-one + NADPH + H(+) = 5alpha-androstane-3beta,17beta-diol + NADP(+). It catalyses the reaction androst-4-ene-3,11,17-trione + NADPH + H(+) = 17beta-hydroxyandrost-4-ene-3,11-dione + NADP(+). It carries out the reaction 11beta-hydroxyandrost-4-ene-3,17-dione + NADPH + H(+) = 11beta,17beta-dihydroxyandrost-4-ene-3-one + NADP(+). The protein operates within hormone biosynthesis; testosterone biosynthesis. It functions in the pathway steroid metabolism. Functionally, catalyzes the conversion of 17-oxosteroids to 17beta-hydroxysteroids. Favors the reduction of androstenedione to testosterone. Testosterone is the key androgen driving male development and function. Uses NADPH while the two other EDH17B enzymes use NADH. Androgens such as epiandrosterone, dehydroepiandrosterone, androsterone and androstanedione are accepted as substrates and reduced at C-17. Can reduce 11-ketoandrostenedione as well as 11beta-hydroxyandrostenedione at C-17 to the respective testosterone forms. The chain is 17-beta-hydroxysteroid dehydrogenase type 3 from Homo sapiens (Human).